The sequence spans 218 residues: Ribose-5-phosphate isomerase A (218 aa).

Substrate-binding positions include 28-31 (TGST), 81-84 (DGAD), and 94-97 (KGGG). E103 (proton acceptor) is an active-site residue. K121 serves as a coordination point for substrate.

This sequence belongs to the ribose 5-phosphate isomerase family. As to quaternary structure, homodimer.

The enzyme catalyses aldehydo-D-ribose 5-phosphate = D-ribulose 5-phosphate. It participates in carbohydrate degradation; pentose phosphate pathway; D-ribose 5-phosphate from D-ribulose 5-phosphate (non-oxidative stage): step 1/1. Catalyzes the reversible conversion of ribose-5-phosphate to ribulose 5-phosphate. The polypeptide is Ribose-5-phosphate isomerase A (Yersinia pseudotuberculosis serotype IB (strain PB1/+)).